The following is a 2429-amino-acid chain: Highly reducing polyketide synthase acrA (2429 aa).

In terms of domain architecture, Ketosynthase family 3 (KS3) spans 4-436 (PEPIAIVGMG…GTNAHAIIES (433 aa)). Residues Cys-177, His-314, and His-356 each act as for beta-ketoacyl synthase activity in the active site. The segment at 541–861 (VFTGQGAQWP…PYSGTLSRGQ (321 aa)) is malonyl-CoA:ACP transacylase (MAT) domain. Residues 931–1068 (HPLLGVRSTE…GTVRVVLGPA (138 aa)) are N-terminal hotdog fold. Residues 931 to 1229 (HPLLGVRSTE…RCSSLTPPGP (299 aa)) are dehydratase (DH) domain. One can recognise a PKS/mFAS DH domain in the interval 931 to 1230 (HPLLGVRSTE…CSSLTPPGPR (300 aa)). His-963 serves as the catalytic Proton acceptor; for dehydratase activity. The tract at residues 1082–1230 (VFHEVKTERF…CSSLTPPGPR (149 aa)) is C-terminal hotdog fold. Asp-1141 acts as the Proton donor; for dehydratase activity in catalysis. The segment at 1388–1577 (NGYMGRVAGQ…VNDFVDESKY (190 aa)) is methyltransferase (MT) domain. The ketoreductase (KR) domain stretch occupies residues 2065-2235 (TYLLVGCTGG…ARGLAASVFH (171 aa)). Positions 2351–2428 (EVDGVIQEAF…ELCREAASEV (78 aa)) constitute a Carrier domain. Ser-2388 is modified (O-(pantetheine 4'-phosphoryl)serine).

The protein operates within secondary metabolite biosynthesis. Functionally, highly reducing polyketide synthase; part of the cluster that mediates the biosynthesis of acurin A, a highly reduced polyketide coupled to a serine via a peptide bond. The activities of the highly reducing polyketide synthase acrA and the nonribosomal peptide synthetase acrB are collectively responsible for the synthesis of the acurin A core structure with a heptaketide backbone produced by acrA covalently fused to a L-serine by acrB. After the formation of the PK-NRP hybrid product, it is detached from acrB by reductive release to set up the formation of the lactam ring by aldol condensation. The hydrolyase acrC then catalyzes water loss to generate a double bond in the ring. This double bond is probably reduced, which is followed by three oxidations at C-22 to generate the carboxylic acid moiety, involving probably the FAD-binding monooxygenase acrE and the cytochrome P450 monooxygenases acrD and acrF. Finally, a last methylation step performed by the O-methyltransferase acrG leads to the production of acurin A. The polypeptide is Highly reducing polyketide synthase acrA (Aspergillus aculeatus (strain ATCC 16872 / CBS 172.66 / WB 5094)).